A 436-amino-acid chain; its full sequence is Acetyl-CoA decarbonylase/synthase complex subunit delta 2 (436 aa).

The protein belongs to the CdhD family. In terms of assembly, heterodimer of delta and gamma chains. The ACDS complex is made up of alpha, epsilon, beta, gamma and delta chains with a probable stoichiometry of (alpha(2)epsilon(2))(4)-beta(8)-(gamma(1)delta(1))(8) (Potential).

Its pathway is one-carbon metabolism; methanogenesis from acetate. Functionally, part of a complex that catalyzes the reversible cleavage of acetyl-CoA, allowing growth on acetate as sole source of carbon and energy. Probably maintains the overall quaternary structure of the ACDS complex. The polypeptide is Acetyl-CoA decarbonylase/synthase complex subunit delta 2 (cdhD2) (Methanosarcina acetivorans (strain ATCC 35395 / DSM 2834 / JCM 12185 / C2A)).